The following is a 383-amino-acid chain: Succinyl-diaminopimelate desuccinylase (383 aa).

Histidine 73 lines the Zn(2+) pocket. Residue aspartate 75 is part of the active site. Position 107 (aspartate 107) interacts with Zn(2+). Glutamate 141 functions as the Proton acceptor in the catalytic mechanism. Zn(2+)-binding residues include glutamate 142, glutamate 170, and histidine 356.

This sequence belongs to the peptidase M20A family. DapE subfamily. As to quaternary structure, homodimer. The cofactor is Zn(2+). It depends on Co(2+) as a cofactor.

The enzyme catalyses N-succinyl-(2S,6S)-2,6-diaminopimelate + H2O = (2S,6S)-2,6-diaminopimelate + succinate. The protein operates within amino-acid biosynthesis; L-lysine biosynthesis via DAP pathway; LL-2,6-diaminopimelate from (S)-tetrahydrodipicolinate (succinylase route): step 3/3. Catalyzes the hydrolysis of N-succinyl-L,L-diaminopimelic acid (SDAP), forming succinate and LL-2,6-diaminopimelate (DAP), an intermediate involved in the bacterial biosynthesis of lysine and meso-diaminopimelic acid, an essential component of bacterial cell walls. The protein is Succinyl-diaminopimelate desuccinylase of Pseudomonas syringae pv. syringae (strain B728a).